Reading from the N-terminus, the 361-residue chain is Mitochondrial import receptor subunit TOM40 homolog (361 aa).

The tract at residues 1-73 (MGNVLAASSP…GAAAASEDGS (73 aa)) is disordered. Residues 11-36 (PAGPPPPPTPSLVGLPPPPPSPPGFT) are compositionally biased toward pro residues. Over residues 40–50 (LGGGLGTGSST) the composition is skewed to gly residues. Over residues 51-69 (GRGSERTPGAAASGAAAAS) the composition is skewed to low complexity.

The protein belongs to the Tom40 family. As to quaternary structure, forms part of the preprotein translocase complex of the outer mitochondrial membrane (TOM complex) which consists of at least 7 different proteins (TOMM5, TOMM6, TOMM7, TOMM20, TOMM22, TOMM40 and TOMM70). Interacts with mitochondrial targeting sequences. Interacts with TIMM29; linking the TIM22 complex to the TOM complex. Forms a complex with BCAP31 (via C-terminus) which mediates the translocation of components of the mitochondrial membrane respiratory chain NADH dehydrogenase (Complex I) from the cytosol to the mitochondria. Interacts (via N-terminus) with CYP1A1 (via mitochondrial targeting signal); this interaction is required for CYP1A1 translocation across the mitochondrial outer membrane.

The protein resides in the mitochondrion outer membrane. Its function is as follows. Channel-forming protein essential for import of protein precursors into mitochondria. Plays a role in the assembly of the mitochondrial membrane respiratory chain NADH dehydrogenase (Complex I) by forming a complex with BCAP31 and mediating the translocation of Complex I components from the cytosol to the mitochondria. This is Mitochondrial import receptor subunit TOM40 homolog (Tomm40) from Mus musculus (Mouse).